The chain runs to 1102 residues: Putative helicase/primase complex protein (1102 aa).

2 disordered regions span residues 1031-1057 (TKEE…EETC) and 1082-1102 (EETC…FTET).

The protein belongs to the asfivirus F1055L family.

Its function is as follows. May be involved in DNA replication. The polypeptide is Putative helicase/primase complex protein (African swine fever virus (isolate Tick/Malawi/Lil 20-1/1983) (ASFV)).